We begin with the raw amino-acid sequence, 239 residues long: Sugar fermentation stimulation protein homolog (239 aa).

Belongs to the SfsA family.

This is Sugar fermentation stimulation protein homolog from Methanobrevibacter smithii (strain ATCC 35061 / DSM 861 / OCM 144 / PS).